The primary structure comprises 368 residues: Peptide chain release factor 2 (368 aa).

Gln251 carries the post-translational modification N5-methylglutamine.

Belongs to the prokaryotic/mitochondrial release factor family. In terms of processing, methylated by PrmC. Methylation increases the termination efficiency of RF2.

It is found in the cytoplasm. Functionally, peptide chain release factor 2 directs the termination of translation in response to the peptide chain termination codons UGA and UAA. This chain is Peptide chain release factor 2, found in Wolinella succinogenes (strain ATCC 29543 / DSM 1740 / CCUG 13145 / JCM 31913 / LMG 7466 / NCTC 11488 / FDC 602W) (Vibrio succinogenes).